The chain runs to 132 residues: Small ribosomal subunit protein uS8 (132 aa).

This sequence belongs to the universal ribosomal protein uS8 family. In terms of assembly, part of the 30S ribosomal subunit. Contacts proteins S5 and S12.

In terms of biological role, one of the primary rRNA binding proteins, it binds directly to 16S rRNA central domain where it helps coordinate assembly of the platform of the 30S subunit. This Acidobacterium capsulatum (strain ATCC 51196 / DSM 11244 / BCRC 80197 / JCM 7670 / NBRC 15755 / NCIMB 13165 / 161) protein is Small ribosomal subunit protein uS8.